The primary structure comprises 105 residues: Heat shock protein HspQ (105 aa).

It belongs to the HspQ family.

It is found in the cytoplasm. In terms of biological role, involved in the degradation of certain denaturated proteins, including DnaA, during heat shock stress. In Salmonella choleraesuis (strain SC-B67), this protein is Heat shock protein HspQ.